The following is a 505-amino-acid chain: Peroxisome proliferator-activated receptor gamma (505 aa).

Residue threonine 84 is glycosylated (O-linked (GlcNAc) threonine). Serine 112 carries the post-translational modification Phosphoserine. Residues 136-210 (AIECRVCGDK…VGMSHNAIRF (75 aa)) constitute a DNA-binding region (nuclear receptor). 2 consecutive NR C4-type zinc fingers follow at residues 139–159 (CRVCGDKASGFHYGVHACEGC) and 176–198 (CDLNCRIHKKSRNKCQYCRFQKC). The interval 205–280 (HNAIRFGRMP…DKSPFVIYDM (76 aa)) is interaction with FAM120B. Residues 238-503 (DLRALAKHLY…HPLLQEIYKD (266 aa)) form the NR LBD domain. Residue lysine 252 forms a Glycyl lysine isopeptide (Lys-Gly) (interchain with G-Cter in ubiquitin) linkage. Residues 314-317 (QFRS), histidine 351, histidine 477, and tyrosine 501 each bind rosiglitazone. The short motif at 495 to 503 (PLLQEIYKD) is the 9aaTAD element.

It belongs to the nuclear hormone receptor family. NR1 subfamily. In terms of assembly, interacts with FOXO1 (acetylated form). Heterodimer with other nuclear receptors, such as RXRA. The heterodimer with the retinoic acid receptor RXRA is called adipocyte-specific transcription factor ARF6. Interacts with NCOA6 coactivator, leading to a strong increase in transcription of target genes. Interacts with coactivator PPARBP, leading to a mild increase in transcription of target genes. Interacts with NOCA7 in a ligand-inducible manner. Interacts with NCOA1 and NCOA2 LXXLL motifs. Interacts with ASXL1, ASXL2, DNTTIP2, FAM120B, MAP2K1/MEK1, NR0B2, PDPK1, PRDM16, PRMT2 and TGFB1I1. Interacts (when activated by agonist) with PPP5C. Interacts with HELZ2 and THRAP3; the interaction stimulates the transcriptional activity of PPARG. Interacts with PER2, the interaction is ligand dependent and blocks PPARG recruitment to target promoters. Interacts with NOCT. Interacts with ACTN4. Interacts (when in the liganded conformation) with GPS2. Interacts with CRY1 and CRY2 in a ligand-dependent manner. In the absence of hormonal ligand, interacts with TACC1. In macrophages, interacts with PAQR3 and STUB1; the interactions promote PPARG poylubiquitination and STUB1-mediated degradation. O-GlcNAcylation at Thr-84 reduces transcriptional activity in adipocytes. In terms of processing, phosphorylated in basal conditions and dephosphorylated when treated with the ligand. May be dephosphorylated by PPP5C. The phosphorylated form may be inactive and dephosphorylation at Ser-112 induces adipogenic activity. Post-translationally, ubiquitinated by E3 ubiquitin-protein ligase complex containing FBXO9; leading to proteasomal degradation. Ubiquitinated at Lys-252 by TRIM55 leading to proteasomal degradation. Ubiquitinated by E3 ubiquitin-protein ligase STUB1/CHIP; leading to proteasomal degradation. In terms of tissue distribution, highest expression in adipose tissue. Lower in skeletal muscle, spleen, heart and liver. Also detectable in placenta, lung and ovary.

The protein localises to the nucleus. It is found in the cytoplasm. PDPK1 activates its transcriptional activity independently of its kinase activity. Nuclear receptor that binds peroxisome proliferators such as hypolipidemic drugs and fatty acids. Once activated by a ligand, the nuclear receptor binds to DNA specific PPAR response elements (PPRE) and modulates the transcription of its target genes, such as acyl-CoA oxidase. It therefore controls the peroxisomal beta-oxidation pathway of fatty acids. Key regulator of adipocyte differentiation and glucose homeostasis. ARF6 acts as a key regulator of the tissue-specific adipocyte P2 (aP2) enhancer. Acts as a critical regulator of gut homeostasis by suppressing NF-kappa-B-mediated pro-inflammatory responses. Plays a role in the regulation of cardiovascular circadian rhythms by regulating the transcription of BMAL1 in the blood vessels. Its function is as follows. (Microbial infection) Upon treatment with M.tuberculosis or its lipoprotein LpqH, phosphorylation of MAPK p38 and IL-6 production are modulated, probably via this protein. In Homo sapiens (Human), this protein is Peroxisome proliferator-activated receptor gamma (PPARG).